We begin with the raw amino-acid sequence, 209 residues long: CASP-like protein 2A1 (209 aa).

Residues 1–38 (MSKMAEEKVLAAPATVDGGMQSSGDLQASSAAAARVRP) lie on the Cytoplasmic side of the membrane. The helical transmembrane segment at 39–59 (VETLLRAAPLGLCVAAMAIML) threads the bilayer. At 60–80 (RNSVTNEYGTVSYSDLGGFKY) the chain is on the extracellular side. The chain crosses the membrane as a helical span at residues 81-101 (LVYANGLCAAYSLASAFYIAV). At 102-109 (PRPATLSR) the chain is on the cytoplasmic side. The helical transmembrane segment at 110–130 (SWVVFLLDQVFTYLILAAGAA) threads the bilayer. Residues 131–163 (SAELLYLAYNGDKEVTWSEACGVFGGFCRQART) lie on the Extracellular side of the membrane. The chain crosses the membrane as a helical span at residues 164-184 (SVAITFASVACYILLSLISSY). Topologically, residues 185–209 (RLFSAYDPPQPSLGNKGVEIAAFPR) are cytoplasmic.

This sequence belongs to the Casparian strip membrane proteins (CASP) family. As to quaternary structure, homodimer and heterodimers.

The protein localises to the cell membrane. The protein is CASP-like protein 2A1 of Oryza sativa subsp. indica (Rice).